A 451-amino-acid polypeptide reads, in one-letter code: Prenyltransferase anuH (451 aa).

6 residues coordinate dimethylallyl diphosphate: Arg-105, Lys-189, Tyr-191, Lys-257, Tyr-259, and Tyr-422.

This sequence belongs to the tryptophan dimethylallyltransferase family.

The catalysed reaction is (8S)-annullatin E + dimethylallyl diphosphate = (8S)-annullatin J + diphosphate. The protein operates within secondary metabolite biosynthesis. Functionally, cytochrome P450 monooxygenase; part of the gene cluster that mediates the biosynthesis of annullatin D, an alkylated aromatic polyketide with a fused dihydrobenzofuran lactone ring system that exhibits potent agonistic activities toward the cannabinoid receptors. Within the pathway, anuH uses dimethylallyl diphosphate (DMAPP) to prenylate (8S)-annullatin E to produce (8S)-annullatin J. Geranyl and farnesyl diphosphate are not consumed by anuH for prenylation. 2-hydroxymethyl-3-pentylphenol, without the hydroxyl group at the side chain, is also accepted by anuH, but only with low conversion yield. The annullatin backbone 2-hydroxymethyl-3-pentylphenol is assembled from one acetyl-CoA starter unit and 5 malonyl-CoA elongation units by cooperation of the highly reducing polyketide synthase anuA, the short-chain dehydrogenase anuB and the oxidoreductase anuC, before being hydroxylated at the C-5 alkyl chain by the cytochrome P450 monooxygenase anuE to form (8S)-annullatin E. The prenyltransferase anuH subsequently installs one isoprenyl group at the benzene ring to form (8S)-annullatin J. Enzymatic or nonenzymatic dihydro-benzofuran ring formation between the prenyl and the phenolic hydroxyl groups in (8S)-annullatin J results in two diastereomers (2S,9S)-annullatin H and compound 12. The intermediate (2S,9S)-annullatin H is then converted to (2S,9S)-annullatin D by the FAD-linked oxidoreductase anuG-catalyzed five-member lactone ring formation. The isomer 12 acts as a substrate for the short-chain dehydrogenase anuF and is oxidized to (2R)-annullatin F, which is subsequently acetylated by an acetyltransferase leading to (2R)-annullatin G formation. The remaining enzymes identified within the cluster, anuD, anuI and anuJ, seem not to be involved in annullatin biosynthesis. The polypeptide is Prenyltransferase anuH (Penicillium roqueforti (strain FM164)).